Here is an 85-residue protein sequence, read N- to C-terminus: Small ribosomal subunit protein uS17 (85 aa).

This sequence belongs to the universal ribosomal protein uS17 family. In terms of assembly, part of the 30S ribosomal subunit.

One of the primary rRNA binding proteins, it binds specifically to the 5'-end of 16S ribosomal RNA. The polypeptide is Small ribosomal subunit protein uS17 (Geobacter sp. (strain M21)).